Here is a 303-residue protein sequence, read N- to C-terminus: Aspartate carbamoyltransferase catalytic subunit (303 aa).

2 residues coordinate carbamoyl phosphate: Arg49 and Thr50. L-aspartate is bound at residue Lys77. 3 residues coordinate carbamoyl phosphate: Arg99, His126, and Gln129. 2 residues coordinate L-aspartate: Arg159 and Arg211. The carbamoyl phosphate site is built by Ser252 and Pro253.

Belongs to the aspartate/ornithine carbamoyltransferase superfamily. ATCase family. As to quaternary structure, heterododecamer (2C3:3R2) of six catalytic PyrB chains organized as two trimers (C3), and six regulatory PyrI chains organized as three dimers (R2).

It carries out the reaction carbamoyl phosphate + L-aspartate = N-carbamoyl-L-aspartate + phosphate + H(+). Its pathway is pyrimidine metabolism; UMP biosynthesis via de novo pathway; (S)-dihydroorotate from bicarbonate: step 2/3. In terms of biological role, catalyzes the condensation of carbamoyl phosphate and aspartate to form carbamoyl aspartate and inorganic phosphate, the committed step in the de novo pyrimidine nucleotide biosynthesis pathway. The sequence is that of Aspartate carbamoyltransferase catalytic subunit from Listeria monocytogenes serovar 1/2a (strain ATCC BAA-679 / EGD-e).